A 497-amino-acid chain; its full sequence is Alkene monooxygenase system, oxygenase component subunit alpha (497 aa).

Glu-104, Glu-134, His-137, Glu-197, Glu-231, and His-234 together coordinate Fe cation.

The protein belongs to the TmoA/XamoA family. The alkene monooxygenase multicomponent enzyme system is composed of an electron transfer component and a monooxygenase component interacting with the effector protein XamoD. The electron transfer component is composed of a ferredoxin reductase (XamoF) and a ferredoxin (XamoC), and the monooxygenase component is formed by a heterohexamer (dimer of heterotrimers) of two alpha subunits (XamoA), two beta subunits (XamoE) and two gamma subunits (XamoB). Requires Fe(2+) as cofactor.

It is found in the cytoplasm. The enzyme catalyses propene + NADH + O2 + H(+) = 1,2-epoxypropane + NAD(+) + H2O. Its activity is regulated as follows. Inhibited by propyne. Its function is as follows. Component of the alkene monooxygenase multicomponent enzyme system which catalyzes the O2- and NADH-dependent epoxidation of short chain (C2 to C6) alkenes to their corresponding epoxides. Also able to catalyze the oxidation of a number of chlorinated alkenes, including trichloroethylene, cis- and trans-1,2-dichloroethylene, vinyl chloride, 1-chloropropylene, 1,3-dichloropropylene and 2,3-dichloropropylene. The sequence is that of Alkene monooxygenase system, oxygenase component subunit alpha from Xanthobacter autotrophicus (strain ATCC BAA-1158 / Py2).